A 141-amino-acid polypeptide reads, in one-letter code: Hemoglobin subunit alpha-A/A' (141 aa).

Positions 1 to 141 (VLSANDKTNV…VGNVLTAKYR (141 aa)) constitute a Globin domain. H58 contributes to the O2 binding site. Residue H87 coordinates heme b.

It belongs to the globin family. As to quaternary structure, heterotetramer of two alpha chains and two beta chains. Red blood cells.

Its function is as follows. Involved in oxygen transport from the lung to the various peripheral tissues. This is Hemoglobin subunit alpha-A/A' (HBAA) from Gyps rueppelli (Rueppell's griffon).